The following is a 228-amino-acid chain: 2,3-bisphosphoglycerate-dependent phosphoglycerate mutase (228 aa).

Substrate contacts are provided by residues 8–15 (RHGLSEWN), 21–22 (TG), arginine 60, 87–90 (ERHY), lysine 98, 114–115 (RR), and 183–184 (GN). Residue histidine 9 is the Tele-phosphohistidine intermediate of the active site. The Proton donor/acceptor role is filled by glutamate 87.

It belongs to the phosphoglycerate mutase family. BPG-dependent PGAM subfamily.

The catalysed reaction is (2R)-2-phosphoglycerate = (2R)-3-phosphoglycerate. It participates in carbohydrate degradation; glycolysis; pyruvate from D-glyceraldehyde 3-phosphate: step 3/5. Functionally, catalyzes the interconversion of 2-phosphoglycerate and 3-phosphoglycerate. The protein is 2,3-bisphosphoglycerate-dependent phosphoglycerate mutase of Enterococcus faecalis (strain ATCC 700802 / V583).